Here is a 145-residue protein sequence, read N- to C-terminus: 3-hydroxyacyl-[acyl-carrier-protein] dehydratase FabZ (145 aa).

Histidine 47 is a catalytic residue.

This sequence belongs to the thioester dehydratase family. FabZ subfamily.

It is found in the cytoplasm. It catalyses the reaction a (3R)-hydroxyacyl-[ACP] = a (2E)-enoyl-[ACP] + H2O. Involved in unsaturated fatty acids biosynthesis. Catalyzes the dehydration of short chain beta-hydroxyacyl-ACPs and long chain saturated and unsaturated beta-hydroxyacyl-ACPs. The chain is 3-hydroxyacyl-[acyl-carrier-protein] dehydratase FabZ from Geotalea uraniireducens (strain Rf4) (Geobacter uraniireducens).